The following is a 98-amino-acid chain: Putative zinc finger protein ORF98b (98 aa).

The C2H2-type zinc-finger motif lies at 54 to 77 (GFCPYCHNHYRTFGILANHIMRSH).

In Acidianus convivator (ATV), this protein is Putative zinc finger protein ORF98b.